The following is a 528-amino-acid chain: Na(+)/H(+) antiporter NhaB (528 aa).

11 helical membrane-spanning segments follow: residues 10–30, 63–83, 96–116, 131–165, 204–224, 240–260, 305–325, 359–379, 391–411, 449–469, and 476–496; these read IGNFLGNSPKWYKIAILSFLI, YPLQPGGLLAIEAVAIGMTSA, VLLLLVFMVAGIYFMKQLLLF, VSLMFCLTSAFLSAFLDALTVIAVIIAVAVGFYAI, LLMHAGVGTALGGVCTMVGEP, FVVRMSPVTVPVLIAGILTCL, VLVGVWLIAGLALHLASVGLV, LAVFFAVVAVIIDQHLFAPVI, LVIFYIANGLLSMVSDNVFVG, ATPNGQAAFLFLLTSALAPLI, and MVWMALPYTIVLSVVGVLAIE.

It belongs to the NhaB Na(+)/H(+) (TC 2.A.34) antiporter family.

It localises to the cell inner membrane. It carries out the reaction 2 Na(+)(in) + 3 H(+)(out) = 2 Na(+)(out) + 3 H(+)(in). Functionally, na(+)/H(+) antiporter that extrudes sodium in exchange for external protons. The protein is Na(+)/H(+) antiporter NhaB of Shewanella sp. (strain W3-18-1).